Here is a 161-residue protein sequence, read N- to C-terminus: Nucleotide-binding protein XOO0647 (161 aa).

Belongs to the YajQ family.

In terms of biological role, nucleotide-binding protein. This Xanthomonas oryzae pv. oryzae (strain MAFF 311018) protein is Nucleotide-binding protein XOO0647.